Reading from the N-terminus, the 443-residue chain is Xaa-Pro dipeptidase (443 aa).

Residues Asp-244, Asp-255, His-339, Glu-384, and Glu-423 each contribute to the Mn(2+) site.

This sequence belongs to the peptidase M24B family. Bacterial-type prolidase subfamily. It depends on Mn(2+) as a cofactor.

It carries out the reaction Xaa-L-Pro dipeptide + H2O = an L-alpha-amino acid + L-proline. Its function is as follows. Splits dipeptides with a prolyl residue in the C-terminal position. In Pseudoalteromonas atlantica (strain T6c / ATCC BAA-1087), this protein is Xaa-Pro dipeptidase.